The chain runs to 470 residues: Protein naked cuticle homolog 1 (470 aa).

2 disordered regions span residues 1–21 (MGKLHSKPAAVCKRRESPEGD) and 90–114 (PPEKTDGLGSGDEKKMERVSEPCPG). Gly2 carries N-myristoyl glycine lipidation. The segment covering 92-109 (EKTDGLGSGDEKKMERVS) has biased composition (basic and acidic residues). The interval 125 to 190 (QCDVSMEEDS…LRVKLTVAPD (66 aa)) is interaction with DVL1, DVL2 and DVL3. Residues 131–166 (EEDSRQEWTFTLYDFDNNGKVTREDITSLLHTIYEV) form the EF-hand domain. Positions 144, 146, 148, 150, and 155 each coordinate Ca(2+). Positions 192 to 205 (SQSKRSVLVNQADL) are enriched in polar residues. Disordered regions lie at residues 192–228 (SQSKRSVLVNQADLQSARPRAETKPTEDLRSWEKKQR), 271–314 (QFGP…QGVD), 337–357 (GTQDGSKHFVRSPKAQGKSVG), and 446–470 (GQPVQRHEHHHHHEHHHHYHHFYQT). The span at 210–227 (PRAETKPTEDLRSWEKKQ) shows a compositional bias: basic and acidic residues. Residues 271–281 (QFGPGSPSVAQ) show a composition bias toward polar residues. A compositionally biased stretch (basic residues) spans 452 to 470 (HEHHHHHEHHHHYHHFYQT).

It belongs to the NKD family. In terms of assembly, interacts with DVL1, DVL2, DVL3 and PPP2R3A. In terms of tissue distribution, expressed in colon, heart, kidney, leukocyte, liver, lung, ovary, pancreas, placenta, prostate, skeletal muscle, small intestine and spleen.

The protein localises to the cell membrane. It localises to the cytoplasm. In terms of biological role, cell autonomous antagonist of the canonical Wnt signaling pathway. May activate a second Wnt signaling pathway that controls planar cell polarity. The polypeptide is Protein naked cuticle homolog 1 (NKD1) (Homo sapiens (Human)).